The primary structure comprises 374 residues: Queuine tRNA-ribosyltransferase (374 aa).

The active-site Proton acceptor is D89. Residues 89–93 (DSGGF), D143, Q187, and G214 each bind substrate. Residues 245 to 251 (GVGKPED) are RNA binding. Catalysis depends on D264, which acts as the Nucleophile. An RNA binding; important for wobble base 34 recognition region spans residues 269-273 (TRNAR). Residues C302, C304, C307, and H333 each contribute to the Zn(2+) site.

The protein belongs to the queuine tRNA-ribosyltransferase family. As to quaternary structure, homodimer. Within each dimer, one monomer is responsible for RNA recognition and catalysis, while the other monomer binds to the replacement base PreQ1. It depends on Zn(2+) as a cofactor.

It catalyses the reaction 7-aminomethyl-7-carbaguanine + guanosine(34) in tRNA = 7-aminomethyl-7-carbaguanosine(34) in tRNA + guanine. Its pathway is tRNA modification; tRNA-queuosine biosynthesis. Functionally, catalyzes the base-exchange of a guanine (G) residue with the queuine precursor 7-aminomethyl-7-deazaguanine (PreQ1) at position 34 (anticodon wobble position) in tRNAs with GU(N) anticodons (tRNA-Asp, -Asn, -His and -Tyr). Catalysis occurs through a double-displacement mechanism. The nucleophile active site attacks the C1' of nucleotide 34 to detach the guanine base from the RNA, forming a covalent enzyme-RNA intermediate. The proton acceptor active site deprotonates the incoming PreQ1, allowing a nucleophilic attack on the C1' of the ribose to form the product. After dissociation, two additional enzymatic reactions on the tRNA convert PreQ1 to queuine (Q), resulting in the hypermodified nucleoside queuosine (7-(((4,5-cis-dihydroxy-2-cyclopenten-1-yl)amino)methyl)-7-deazaguanosine). The polypeptide is Queuine tRNA-ribosyltransferase (Shewanella loihica (strain ATCC BAA-1088 / PV-4)).